The sequence spans 1237 residues: Tyrosine-protein kinase sid-3 (1237 aa).

The 263-residue stretch at 107–369 (IKLYELIGEG…REDLVAAMFL (263 aa)) folds into the Protein kinase domain. ATP contacts are provided by residues 113–121 (IGEGSFAVV) and Lys-139. The active-site Proton acceptor is the Asp-230. Residues 366–426 (AMFLDAVARE…PRSVVFAQTN (61 aa)) form the SH3 domain. Disordered regions lie at residues 683–704 (NQGS…GIQN), 741–802 (PPAP…APVQ), 826–919 (IQPQ…EERR), 940–986 (SNST…SEPI), 999–1018 (SATT…PSPP), and 1134–1156 (QQRQ…SAAS). Polar residues-rich tracts occupy residues 749–766 (QPVS…TLQK), 778–791 (KRPT…SNGF), and 847–863 (SAPT…SQAS). 2 stretches are compositionally biased toward low complexity: residues 881 to 910 (TPIT…TSTT) and 940 to 961 (SNST…PSTA). Residues 1138-1156 (AGSSSRAVPPASASTSAAS) show a composition bias toward low complexity.

This sequence belongs to the protein kinase superfamily. Tyr protein kinase family. SYK/ZAP-70 subfamily. As to expression, ubiquitously present in all tissues tested. Expressed in the somatic cells of gut, pharynx, body wall muscle, neurons, skin and excretory canal cells.

It is found in the cytoplasm. It catalyses the reaction L-tyrosyl-[protein] + ATP = O-phospho-L-tyrosyl-[protein] + ADP + H(+). Its function is as follows. Tyrosine-protein kinase which plays a role in RNA-mediated gene silencing by mediating import of double-stranded RNA (dsRNA) into cells. Not required for import of ingested dsRNA into intestinal cells but involved in subsequent export from intestinal cells to internal tissues. The chain is Tyrosine-protein kinase sid-3 (sid-3) from Caenorhabditis elegans.